A 200-amino-acid chain; its full sequence is Imidazoleglycerol-phosphate dehydratase (200 aa).

It belongs to the imidazoleglycerol-phosphate dehydratase family.

It localises to the cytoplasm. The catalysed reaction is D-erythro-1-(imidazol-4-yl)glycerol 3-phosphate = 3-(imidazol-4-yl)-2-oxopropyl phosphate + H2O. It participates in amino-acid biosynthesis; L-histidine biosynthesis; L-histidine from 5-phospho-alpha-D-ribose 1-diphosphate: step 6/9. The chain is Imidazoleglycerol-phosphate dehydratase from Chlorobium phaeobacteroides (strain DSM 266 / SMG 266 / 2430).